Here is a 949-residue protein sequence, read N- to C-terminus: Copper-transporting ATPase PAA1, chloroplastic (949 aa).

The transit peptide at 1–103 (MESTLSAFST…SSSPSFRSIS (103 aa)) directs the protein to the chloroplast. Residues 113 to 126 (YNGGSGGGGGGGSE) show a composition bias toward gly residues. The disordered stretch occupies residues 113–142 (YNGGSGGGGGGGSESGDSKSKLGANASDGV). One can recognise an HMA domain in the interval 148-222 (DIIILDVGGM…HLTNCGFQST (75 aa)). Residues Cys-159 and Cys-162 each coordinate Cu(+). 6 helical membrane passes run 253–274 (LAVS…FLGV), 287–306 (FHVS…LVLD), 314–334 (GSPN…SVSS), 349–369 (EEPV…QRAK), 502–524 (VAGR…WNLF), and 543–560 (LQLS…ALGL). The 4-aspartylphosphate intermediate role is filled by Asp-598. 807–814 (GDGINDAA) is a binding site for ATP. The Mg(2+) site is built by Asp-808 and Asp-812. 2 helical membrane passes run 863-882 (KQNL…IAAG) and 895-913 (SMAG…TNSL). The tract at residues 925–949 (DKNVKPEPKEGTKQPHENTRWKQSS) is disordered.

It belongs to the cation transport ATPase (P-type) (TC 3.A.3) family. Type IB subfamily. In terms of tissue distribution, expressed in the shoots and roots.

It is found in the plastid. The protein resides in the chloroplast membrane. The catalysed reaction is Cu(+)(in) + ATP + H2O = Cu(+)(out) + ADP + phosphate + H(+). Functionally, mediates copper transfer across the plastid envelope. Required for the delivery of copper into the plastid stroma, which is essential for the function of copper proteins. Seems to be selective for monovalent copper Cu(+) transport. Also plays a role in glucose signaling-mediated cell proliferation of root meristem in non-green tissues. This Arabidopsis thaliana (Mouse-ear cress) protein is Copper-transporting ATPase PAA1, chloroplastic (PAA1).